A 139-amino-acid chain; its full sequence is MAPKVAEKKPSLAGKAPAGKAPAEKKEAGKKTTTATGEKKKRTKARKETYSSYIYKVLKQTHPDTGISTRAMSIMNSFVNDIFERVATEASKLATYTKKSTITSREIQTAVRLILPGELAKHATGDGTRAVAKYSTFDN.

Over residues 1-10 (MAPKVAEKKP) the composition is skewed to basic and acidic residues. Residues 1-47 (MAPKVAEKKPSLAGKAPAGKAPAEKKEAGKKTTTATGEKKKRTKARK) are disordered. An N6-acetyllysine; alternate mark is found at Lys8 and Lys9. Glycyl lysine isopeptide (Lys-Gly) (interchain with G-Cter in SUMO); alternate cross-links involve residues Lys8 and Lys9. The residue at position 15 (Lys15) is an N6-acetyllysine. Position 25 is an N6-acetyllysine; alternate (Lys25). Residue Lys25 forms a Glycyl lysine isopeptide (Lys-Gly) (interchain with G-Cter in SUMO); alternate linkage. Residue Lys26 forms a Glycyl lysine isopeptide (Lys-Gly) (interchain with G-Cter in SUMO) linkage. Residue Lys133 forms a Glycyl lysine isopeptide (Lys-Gly) (interchain with G-Cter in ubiquitin) linkage.

The protein belongs to the histone H2B family. In terms of assembly, the nucleosome is a histone octamer containing two molecules each of H2A, H2B, H3 and H4 assembled in one H3-H4 heterotetramer and two H2A-H2B heterodimers. The octamer wraps approximately 147 bp of DNA. Post-translationally, monoubiquitinated by the UBC2-BRE1 complex to form H2BK123ub1. H2BK123ub1 gives a specific tag for epigenetic transcriptional activation and is also prerequisite for H3K4me and H3K79me formation. H2BK123ub1 also modulates the formation of double-strand breaks during meiosis and is a prerequisite for DNA-damage checkpoint activation. In terms of processing, acetylated by GCN5 to form H2BK11ac and H2BK16ac. H2BK16ac can also be formed by ESA1. Acetylation of N-terminal lysines and particularly formation of H2BK11acK16ac has a positive effect on transcription. Sumoylation to form H2BK6su or H2BK7su, and probably also H2BK16su or H2BK17su, occurs preferentially near the telomeres and represses gene transcription.

It is found in the nucleus. It localises to the chromosome. Core component of nucleosome. Nucleosomes wrap and compact DNA into chromatin, limiting DNA accessibility to the cellular machineries which require DNA as a template. Histones thereby play a central role in transcription regulation, DNA repair, DNA replication and chromosomal stability. DNA accessibility is regulated via a complex set of post-translational modifications of histones, also called histone code, and nucleosome remodeling. The protein is Histone H2B (HTB1) of Yarrowia lipolytica (strain CLIB 122 / E 150) (Yeast).